Reading from the N-terminus, the 236-residue chain is MINFGSCWGLASVTSNSFSIISGFSSNSVSHAHDMGLVPDLPPTVAAIKNPTSKIVYDEHNHERYPPGDPSKRAFAYFVLTGGRFVYASLVRLLILKFVLSMSASKDVLALASLEVDLSSIEPGTTVTVKWRGKPVFIRRRTEDDINLANSVDLGSLRDPQQDAERVKSPEWLVVIGVCTHLGCIPLPNAGDFGGWFCPCHGSHYDISGRIRKGPAPYNLEVPTYSFLEENKLLIG.

The N-terminal 24 residues, 1-24, are a transit peptide targeting the mitochondrion; sequence MINFGSCWGLASVTSNSFSIISGF. Residues 25–73 are Mitochondrial matrix-facing; that stretch reads SSNSVSHAHDMGLVPDLPPTVAAIKNPTSKIVYDEHNHERYPPGDPSKR. Residues 74–96 form a helical membrane-spanning segment; that stretch reads AFAYFVLTGGRFVYASLVRLLIL. Over 97–236 the chain is Mitochondrial intermembrane; sequence KFVLSMSASK…FLEENKLLIG (140 aa). In terms of domain architecture, Rieske spans 146–234; the sequence is INLANSVDLG…YSFLEENKLL (89 aa). Residues Cys179, His181, Cys198, and His201 each contribute to the [2Fe-2S] cluster site. Residues Cys184 and Cys200 are joined by a disulfide bond.

The protein belongs to the Rieske iron-sulfur protein family. In terms of assembly, component of the ubiquinol-cytochrome c oxidoreductase (cytochrome b-c1 complex, complex III, CIII), a multisubunit enzyme composed of 3 respiratory subunits cytochrome b, cytochrome c1 and Rieske protein, 2 core protein subunits, and several low-molecular weight protein subunits. The complex exists as an obligatory dimer and forms supercomplexes (SCs) in the inner mitochondrial membrane with cytochrome c oxidase (complex IV, CIV). [2Fe-2S] cluster serves as cofactor.

It is found in the mitochondrion inner membrane. It carries out the reaction a quinol + 2 Fe(III)-[cytochrome c](out) = a quinone + 2 Fe(II)-[cytochrome c](out) + 2 H(+)(out). In terms of biological role, component of the ubiquinol-cytochrome c oxidoreductase, a multisubunit transmembrane complex that is part of the mitochondrial electron transport chain which drives oxidative phosphorylation. The respiratory chain contains 3 multisubunit complexes succinate dehydrogenase (complex II, CII), ubiquinol-cytochrome c oxidoreductase (cytochrome b-c1 complex, complex III, CIII) and cytochrome c oxidase (complex IV, CIV), that cooperate to transfer electrons derived from NADH and succinate to molecular oxygen, creating an electrochemical gradient over the inner membrane that drives transmembrane transport and the ATP synthase. The cytochrome b-c1 complex catalyzes electron transfer from ubiquinol to cytochrome c, linking this redox reaction to translocation of protons across the mitochondrial inner membrane, with protons being carried across the membrane as hydrogens on the quinol. In the process called Q cycle, 2 protons are consumed from the matrix, 4 protons are released into the intermembrane space and 2 electrons are passed to cytochrome c. The Rieske protein is a catalytic core subunit containing a [2Fe-2S] iron-sulfur cluster. It cycles between 2 conformational states during catalysis to transfer electrons from the quinol bound in the Q(0) site in cytochrome b to cytochrome c1. This chain is Cytochrome b-c1 complex subunit Rieske-4, mitochondrial, found in Nicotiana tabacum (Common tobacco).